Here is a 564-residue protein sequence, read N- to C-terminus: E3 ubiquitin-protein ligase RNF168 (564 aa).

The RING-type zinc finger occupies Cys-16–Arg-55. Ser-70 is modified (phosphoserine). The short motif at Leu-110 to Glu-128 is the LR motif 1 element. At Ser-134 the chain carries Phosphoserine. Positions Glu-143 to Ala-151 match the UMI motif motif. 2 disordered regions span residues Leu-149–Ala-179 and Asn-193–Glu-291. Positions Glu-157–Ala-179 are enriched in basic and acidic residues. Positions Met-168 to Glu-191 match the MIU motif 1 motif. Ser-197 carries the post-translational modification Phosphoserine. Lys-210 participates in a covalent cross-link: Glycyl lysine isopeptide (Lys-Gly) (interchain with G-Cter in SUMO2). A compositionally biased stretch (basic and acidic residues) spans Lys-242 to Asp-259. Positions Pro-275–Gln-288 are enriched in polar residues. Thr-348 and Thr-361 each carry phosphothreonine. A phosphoserine mark is found at Ser-413 and Ser-414. The MIU motif 2 signature appears at Arg-438–Met-461. A disordered region spans residues Glu-455–Arg-564. Positions Arg-465–Arg-476 match the LR motif 2 motif. Over residues Gln-466 to Pro-480 the composition is skewed to polar residues. Residue Ser-469 is modified to Phosphoserine. The segment covering Asn-491–Tyr-515 has biased composition (basic and acidic residues). 2 stretches are compositionally biased toward polar residues: residues Phe-519–Lys-531 and Gln-555–Arg-564. Lys-524 is covalently cross-linked (Glycyl lysine isopeptide (Lys-Gly) (interchain with G-Cter in SUMO2)).

The protein belongs to the RNF168 family. As to quaternary structure, monomer. Interacts with UBE2N/UBC13. Sumoylated with SUMO1 by PIAS4 in response to double-strand breaks (DSBs). In terms of processing, ubiquitinated.

The protein resides in the nucleus. The enzyme catalyses S-ubiquitinyl-[E2 ubiquitin-conjugating enzyme]-L-cysteine + [acceptor protein]-L-lysine = [E2 ubiquitin-conjugating enzyme]-L-cysteine + N(6)-ubiquitinyl-[acceptor protein]-L-lysine.. Its pathway is protein modification; protein ubiquitination. E3 ubiquitin-protein ligase required for accumulation of repair proteins to sites of DNA damage. Acts with UBE2N/UBC13 to amplify the RNF8-dependent histone ubiquitination. Recruited to sites of DNA damage at double-strand breaks (DSBs) by binding to ubiquitinated histone H2A and H2AX and amplifies the RNF8-dependent H2A ubiquitination, promoting the formation of 'Lys-63'-linked ubiquitin conjugates. This leads to concentrate ubiquitinated histones H2A and H2AX at DNA lesions to the threshold required for recruitment of TP53BP1 and BRCA1. Also recruited at DNA interstrand cross-links (ICLs) sites and promotes accumulation of 'Lys-63'-linked ubiquitination of histones H2A and H2AX, leading to recruitment of FAAP20 and Fanconi anemia (FA) complex, followed by interstrand cross-link repair. H2A ubiquitination also mediates the ATM-dependent transcriptional silencing at regions flanking DSBs in cis, a mechanism to avoid collision between transcription and repair intermediates. Also involved in class switch recombination in immune system, via its role in regulation of DSBs repair. Following DNA damage, promotes the ubiquitination and degradation of JMJD2A/KDM4A in collaboration with RNF8, leading to unmask H4K20me2 mark and promote the recruitment of TP53BP1 at DNA damage sites. Not able to initiate 'Lys-63'-linked ubiquitination in vitro; possibly due to partial occlusion of the UBE2N/UBC13-binding region. Catalyzes monoubiquitination of 'Lys-13' and 'Lys-15' of nucleosomal histone H2A (H2AK13Ub and H2AK15Ub, respectively). The chain is E3 ubiquitin-protein ligase RNF168 from Rattus norvegicus (Rat).